Consider the following 883-residue polypeptide: AP-5 complex subunit beta-1 (883 aa).

Probably part of the adaptor protein complex 5 (AP-5).

In terms of biological role, as part of AP-5, a probable fifth adaptor protein complex, it may be involved in endosomal transport. The sequence is that of AP-5 complex subunit beta-1 (ap5b1) from Xenopus tropicalis (Western clawed frog).